The chain runs to 320 residues: Beta-ketoacyl-[acyl-carrier-protein] synthase III (320 aa).

Residues C112 and H245 contribute to the active site. Residues 246-250 (QANIR) form an ACP-binding region. N275 is an active-site residue.

This sequence belongs to the thiolase-like superfamily. FabH family. As to quaternary structure, homodimer.

The protein resides in the cytoplasm. It carries out the reaction malonyl-[ACP] + acetyl-CoA + H(+) = 3-oxobutanoyl-[ACP] + CO2 + CoA. It functions in the pathway lipid metabolism; fatty acid biosynthesis. Its function is as follows. Catalyzes the condensation reaction of fatty acid synthesis by the addition to an acyl acceptor of two carbons from malonyl-ACP. Catalyzes the first condensation reaction which initiates fatty acid synthesis and may therefore play a role in governing the total rate of fatty acid production. Possesses both acetoacetyl-ACP synthase and acetyl transacylase activities. Its substrate specificity determines the biosynthesis of branched-chain and/or straight-chain of fatty acids. This Streptococcus thermophilus (strain ATCC BAA-250 / LMG 18311) protein is Beta-ketoacyl-[acyl-carrier-protein] synthase III.